We begin with the raw amino-acid sequence, 172 residues long: Peptidyl-tRNA hydrolase (172 aa).

A tRNA-binding site is contributed by tyrosine 10. Histidine 15 serves as the catalytic Proton acceptor. TRNA contacts are provided by phenylalanine 59, asparagine 61, and asparagine 101.

It belongs to the PTH family. As to quaternary structure, monomer.

It localises to the cytoplasm. It carries out the reaction an N-acyl-L-alpha-aminoacyl-tRNA + H2O = an N-acyl-L-amino acid + a tRNA + H(+). Functionally, hydrolyzes ribosome-free peptidyl-tRNAs (with 1 or more amino acids incorporated), which drop off the ribosome during protein synthesis, or as a result of ribosome stalling. Its function is as follows. Catalyzes the release of premature peptidyl moieties from peptidyl-tRNA molecules trapped in stalled 50S ribosomal subunits, and thus maintains levels of free tRNAs and 50S ribosomes. The protein is Peptidyl-tRNA hydrolase of Rubrobacter xylanophilus (strain DSM 9941 / JCM 11954 / NBRC 16129 / PRD-1).